Consider the following 328-residue polypeptide: MDMISGSTAATSTPHNNQQAVMLSSPIIKEEARDPKQTRAMPQIGGSGERKPRPQLPEALKCPRCDSNNTKFCYYNNYSMSQPRYFCKACRRYWTHGGTLRNVPIGGGCRKNKHASRFVLGSHTSSSSSATYAPLSPSTNASSSNMSINKHMMMVPNMTMPTPTTMGLFPNVLPTLMPTGGGGGFDFTMDNQHRSLSFTPMSLPSQGPVPMLAAGGSEATPSFLEMLRGGIFHGSSSYNTSLTMSGGNNGMDKPFSLPSYGAMCTNGLSGSTTNDARQLVGPQQDNKAIMKSSNNNNGVSLLNLYWNKHNNNNNNNNNNNNNNNNKGQ.

The tract at residues 33 to 56 (RDPKQTRAMPQIGGSGERKPRPQL) is disordered. The Dof-type zinc-finger motif lies at 60–114 (LKCPRCDSNNTKFCYYNNYSMSQPRYFCKACRRYWTHGGTLRNVPIGGGCRKNKH). 4 residues coordinate Zn(2+): C62, C65, C87, and C90. Disordered regions lie at residues 124–144 (TSSS…ASSS) and 306–328 (WNKH…NKGQ).

In terms of assembly, interacts with the bZIP transcription factor Opaque-2/O2. In terms of tissue distribution, seed endosperm.

The protein resides in the nucleus. Transcription factor that binds specifically to a 5'-AA[AG]G-3' consensus core sequence. May enhance the DNA binding of the bZIP transcription factor Opaque-2 to O2 binding site elements. This chain is Dof zinc finger protein PBF (PBF), found in Zea mays (Maize).